We begin with the raw amino-acid sequence, 245 residues long: tRNA (guanine-N(1)-)-methyltransferase (245 aa).

S-adenosyl-L-methionine-binding positions include Gly113 and 133–138; that span reads IGDYVL.

It belongs to the RNA methyltransferase TrmD family. Homodimer.

It is found in the cytoplasm. It carries out the reaction guanosine(37) in tRNA + S-adenosyl-L-methionine = N(1)-methylguanosine(37) in tRNA + S-adenosyl-L-homocysteine + H(+). Specifically methylates guanosine-37 in various tRNAs. The protein is tRNA (guanine-N(1)-)-methyltransferase of Actinobacillus succinogenes (strain ATCC 55618 / DSM 22257 / CCUG 43843 / 130Z).